The chain runs to 205 residues: Urease accessory protein UreG (205 aa).

14 to 21 (GPVGSGKT) provides a ligand contact to GTP.

The protein belongs to the SIMIBI class G3E GTPase family. UreG subfamily. Homodimer. UreD, UreF and UreG form a complex that acts as a GTP-hydrolysis-dependent molecular chaperone, activating the urease apoprotein by helping to assemble the nickel containing metallocenter of UreC. The UreE protein probably delivers the nickel.

It is found in the cytoplasm. In terms of biological role, facilitates the functional incorporation of the urease nickel metallocenter. This process requires GTP hydrolysis, probably effectuated by UreG. This chain is Urease accessory protein UreG, found in Escherichia coli O157:H7.